A 289-amino-acid polypeptide reads, in one-letter code: Nodulation protein NolT (289 aa).

The first 33 residues, 1-33 (MFGSAHGDTTSSDTSGRRPLRLVVLPLLLALSS), serve as a signal peptide directing secretion. C34 is lipidated: N-palmitoyl cysteine. A lipid anchor (S-diacylglycerol cysteine) is attached at C34. Residues 233 to 253 (VAVGVGAAVFAVTCYLLFIVL) form a helical membrane-spanning segment.

The protein belongs to the YscJ lipoprotein family.

The protein resides in the cell outer membrane. In terms of biological role, regulates cultivar-specific nodulation of soybean. The protein is Nodulation protein NolT (nolT) of Rhizobium fredii (Sinorhizobium fredii).